A 170-amino-acid polypeptide reads, in one-letter code: Cysteine-rich venom protein VAR4 (170 aa).

Residues 1–22 (MILLKLYLTLAAILCQSRGTTS) form the signal peptide. Residues 41–169 (NKHNDLRRTV…PLKYFLVCQY (129 aa)) form the SCP domain. 3 disulfides stabilise this stretch: C77/C156, C95/C170, and C151/C167.

Belongs to the CRISP family. Post-translationally, contains 8 disulfide bonds. Expressed by the venom gland.

The protein resides in the secreted. Blocks ryanodine receptors, and potassium channels. The polypeptide is Cysteine-rich venom protein VAR4 (Varanus acanthurus (Ridge-tailed monitor)).